We begin with the raw amino-acid sequence, 94 residues long: Putative pterin-4-alpha-carbinolamine dehydratase (94 aa).

Belongs to the pterin-4-alpha-carbinolamine dehydratase family.

The catalysed reaction is (4aS,6R)-4a-hydroxy-L-erythro-5,6,7,8-tetrahydrobiopterin = (6R)-L-erythro-6,7-dihydrobiopterin + H2O. This Mycobacterium sp. (strain JLS) protein is Putative pterin-4-alpha-carbinolamine dehydratase.